Here is a 318-residue protein sequence, read N- to C-terminus: NADH-ubiquinone oxidoreductase chain 1 (318 aa).

Transmembrane regions (helical) follow at residues 3 to 23, 69 to 89, 102 to 122, 146 to 166, 171 to 191, 222 to 242, 253 to 273, and 294 to 314; these read FMNL…LTLL, VLFI…WIPL, ILFM…SGWA, LAII…STLI, HIWL…STLA, LFFL…IILF, ELYT…FLWV, and LPLT…LAGI.

Belongs to the complex I subunit 1 family. As to quaternary structure, core subunit of respiratory chain NADH dehydrogenase (Complex I) which is composed of 45 different subunits.

The protein resides in the mitochondrion inner membrane. It catalyses the reaction a ubiquinone + NADH + 5 H(+)(in) = a ubiquinol + NAD(+) + 4 H(+)(out). Its function is as follows. Core subunit of the mitochondrial membrane respiratory chain NADH dehydrogenase (Complex I) which catalyzes electron transfer from NADH through the respiratory chain, using ubiquinone as an electron acceptor. Essential for the catalytic activity and assembly of complex I. The chain is NADH-ubiquinone oxidoreductase chain 1 (MT-ND1) from Cnephaeus nilssonii (Northern bat).